The primary structure comprises 328 residues: Gonadotropin-releasing hormone receptor (328 aa).

Residues 1–38 are Extracellular-facing; that stretch reads MANGDSPDQNENHCSAINSSILLTPGSLPTLTLSGKIR. N-linked (GlcNAc...) asparagine glycosylation occurs at Asn18. A helical transmembrane segment spans residues 39 to 58; it reads VTVTFFLFLLSTIFNTSFLL. The Cytoplasmic portion of the chain corresponds to 59-77; the sequence is KLQNWTQRKEKRKKLSKMK. A helical transmembrane segment spans residues 78–97; it reads VLLKHLTLANLLETLIVMPL. Residues 98–115 lie on the Extracellular side of the membrane; the sequence is DGMWNITVQWYAGELLCK. An N-linked (GlcNAc...) asparagine glycan is attached at Asn102. Cys114 and Cys196 are oxidised to a cystine. Residues 116–137 traverse the membrane as a helical segment; that stretch reads VLSYLKLFSMYAPAFMMVVISL. The Cytoplasmic portion of the chain corresponds to 138–164; that stretch reads DRSLAITRPLAVKSNSKLGQFMIGLAW. The helical transmembrane segment at 165 to 184 threads the bilayer; it reads LLSSIFAGPQLYIFGMIHLA. At 185–212 the chain is on the extracellular side; sequence DDSGQTEGFSQCVTHCSFPQWWHQAFYN. A helical transmembrane segment spans residues 213-232; sequence FFTFSCLFIIPLLIMLICNA. Over 233 to 281 the chain is Cytoplasmic; the sequence is KIIFTLTRVLHQDPHKLQLNQSKNNIPQARLRTLKMTVAFATSFTVCWT. A helical transmembrane segment spans residues 282–300; it reads PYYVLGIWYWFDPDMVNRV. Residues 301 to 306 are Extracellular-facing; the sequence is SDPVNH. Residues 307-326 traverse the membrane as a helical segment; sequence FFFLFAFLNPCFDPLIYGYF. Residues 327-328 lie on the Cytoplasmic side of the membrane; it reads SL.

Belongs to the G-protein coupled receptor 1 family.

It localises to the cell membrane. In terms of biological role, receptor for gonadotropin releasing hormone (GnRH) that mediates the action of GnRH to stimulate the secretion of the gonadotropic hormones luteinizing hormone (LH) and follicle-stimulating hormone (FSH). This receptor mediates its action by association with G-proteins that activate a phosphatidylinositol-calcium second messenger system. The sequence is that of Gonadotropin-releasing hormone receptor (GNRHR) from Ovis aries (Sheep).